Reading from the N-terminus, the 323-residue chain is Viral cathepsin (323 aa).

A signal peptide spans 1–16 (MNKILFYLFVYAVVKS). The propeptide at 17-112 (AAYDPLKAPN…ILLDQPPGKG (96 aa)) is activation peptide. 3 cysteine pairs are disulfide-bonded: Cys133–Cys174, Cys167–Cys207, and Cys262–Cys310. Cys136 is a catalytic residue. N-linked (GlcNAc...) asparagine; by host glycosylation occurs at Asn158. Residues His269 and Asn289 contribute to the active site.

This sequence belongs to the peptidase C1 family. In terms of processing, synthesized as an inactive proenzyme and activated by proteolytic removal of the inhibitory propeptide.

It catalyses the reaction Endopeptidase of broad specificity, hydrolyzing substrates of both cathepsin L and cathepsin B.. Functionally, cysteine protease that plays an essential role in host liquefaction to facilitate horizontal transmission of the virus. May participate in the degradation of foreign protein expressed by the baculovirus system. The sequence is that of Viral cathepsin (VCATH) from Bombyx mori (Silk moth).